A 463-amino-acid polypeptide reads, in one-letter code: ATP sulfurylase 1, chloroplastic (463 aa).

The transit peptide at 1-48 directs the protein to the chloroplast; the sequence is MASMAAVLSKTPFLSQPLTKSSPNSDLPFAAVSFPSKSLRRRVGSIRA.

Belongs to the sulfate adenylyltransferase family. As to quaternary structure, homotetramer.

The protein localises to the plastid. It localises to the chloroplast stroma. The enzyme catalyses sulfate + ATP + H(+) = adenosine 5'-phosphosulfate + diphosphate. Its pathway is sulfur metabolism; hydrogen sulfide biosynthesis; sulfite from sulfate: step 1/3. Functionally, mediates selenate (Se) reduction, and promotes Se and sulfur (S) uptake and assimilation. This Arabidopsis thaliana (Mouse-ear cress) protein is ATP sulfurylase 1, chloroplastic (APS1).